We begin with the raw amino-acid sequence, 287 residues long: MAGAKEIRSKIASVQNTQKITKAMEMVAASKMRKSQERMAASRPYAETMRKVIGHLALGNLEYKHPYLDERDVKRVGYLVVSTDRGLCGGLNINLFKRLLAEMKGWSEKGVETDLALIGSKAASFFGSVGGNVVAQVTGMGDNPSLSELIGPVKVMLQAYDEGRLDKLYIVSNKFINTMSQEPQIVQLLPLPPAEDGELKKKSWDYLYEPDPKVLLDTLLRRYVESQVYQGVVENLASEQAARMVAMKAATDNGGSLIKELQLVYNKARQASITQELTEIVSGASAV.

This sequence belongs to the ATPase gamma chain family. F-type ATPases have 2 components, CF(1) - the catalytic core - and CF(0) - the membrane proton channel. CF(1) has five subunits: alpha(3), beta(3), gamma(1), delta(1), epsilon(1). CF(0) has three main subunits: a, b and c.

The protein localises to the cell inner membrane. Produces ATP from ADP in the presence of a proton gradient across the membrane. The gamma chain is believed to be important in regulating ATPase activity and the flow of protons through the CF(0) complex. In Serratia proteamaculans (strain 568), this protein is ATP synthase gamma chain.